The following is a 62-amino-acid chain: Sucrase-isomaltase, intestinal (62 aa).

Over 2 to 12 the chain is Cytoplasmic; that stretch reads ARKKFSGLEIX. Residue Ser7 is modified to Phosphoserine; by PKA. The chain crosses the membrane as a helical; Signal-anchor for type II membrane protein span at residues 13 to 32; the sequence is LIVLFAIVLSIAIALVVVXA. Residues 33-38 are Lumenal-facing; it reads SKXPAV. Residue Tyr59 is modified to Sulfotyrosine.

Belongs to the glycosyl hydrolase 31 family. As to quaternary structure, the resulting sucrase and isomaltase subunits stay associated with one another in a complex by non-covalent linkages. Post-translationally, the precursor is proteolytically cleaved when exposed to pancreatic proteases in the intestinal lumen. In terms of processing, sulfated.

The protein localises to the apical cell membrane. It carries out the reaction Hydrolysis of sucrose and maltose by an alpha-D-glucosidase-type action.. The catalysed reaction is Hydrolysis of (1-&gt;6)-alpha-D-glucosidic linkages in some oligosaccharides produced from starch and glycogen by alpha-amylase, and in isomaltose.. Plays an important role in the final stage of carbohydrate digestion. Isomaltase activity is specific for both alpha-1,4- and alpha-1,6-oligosaccharides. This chain is Sucrase-isomaltase, intestinal (SI), found in Sus scrofa (Pig).